The primary structure comprises 419 residues: Glucose-1-phosphate adenylyltransferase (419 aa).

Alpha-D-glucose 1-phosphate is bound by residues Tyr-106, Gly-171, 186-187 (EK), and Ser-204.

Belongs to the bacterial/plant glucose-1-phosphate adenylyltransferase family. As to quaternary structure, homotetramer.

The enzyme catalyses alpha-D-glucose 1-phosphate + ATP + H(+) = ADP-alpha-D-glucose + diphosphate. The protein operates within glycan biosynthesis; glycogen biosynthesis. Functionally, involved in the biosynthesis of ADP-glucose, a building block required for the elongation reactions to produce glycogen. Catalyzes the reaction between ATP and alpha-D-glucose 1-phosphate (G1P) to produce pyrophosphate and ADP-Glc. The sequence is that of Glucose-1-phosphate adenylyltransferase from Roseobacter denitrificans (strain ATCC 33942 / OCh 114) (Erythrobacter sp. (strain OCh 114)).